The primary structure comprises 179 residues: Large ribosomal subunit protein uL5c (179 aa).

It belongs to the universal ribosomal protein uL5 family. Part of the 50S ribosomal subunit; contacts the 5S rRNA.

The protein resides in the plastid. Functionally, binds 5S rRNA, forms part of the central protuberance of the 50S subunit. In Euglena longa (Euglenophycean alga), this protein is Large ribosomal subunit protein uL5c (rpl5).